The chain runs to 34 residues: Beta/mu-theraphotoxin-Pe1a (34 aa).

Cystine bridges form between Cys2–Cys16, Cys9–Cys21, and Cys15–Cys28.

This sequence belongs to the neurotoxin 10 (Hwtx-1) family. 54 (ProTx-1) subfamily. As to expression, expressed by the venom gland.

Its subcellular location is the secreted. Functionally, ion channel impairing toxin that inhibits voltage-gated sodium channels. The recombinantly expressed toxin shows a weak activity against Nav1.7/SCN9A (25% inhibition at 10 uM), and shifts the voltage dependence of channel activation to more depolarized potentials. The sequence is that of Beta/mu-theraphotoxin-Pe1a from Phormingochilus everetti (Malaysian purple earth tiger tarantula).